Consider the following 423-residue polypeptide: Pleckstrin homology domain-containing family O member 1 (423 aa).

Disordered regions lie at residues 1–21, 81–100, and 217–277; these read MEKN…SAQP, RKSK…AHSR, and LAAG…HSEK. The segment covering 7 to 20 has biased composition (polar residues); that stretch reads AKRGQQDGNQQSAQ. A PH domain is found at 20 to 131; the sequence is QPEKVGWVRK…WINALNSAIT (112 aa). The span at 83–92 shows a compositional bias: basic residues; the sequence is SKSRSKKNHS. Residues 222–259 are compositionally biased toward basic and acidic residues; that stretch reads RRSDSENVKLSEKGRSGTLPRHEVTSWDKPTQRKDSLD.

Post-translationally, C-terminal fragments could be released during apoptosis via caspase-3-dependent cleavage.

It is found in the membrane. The protein localises to the nucleus. It localises to the cytoplasm. Plays a role in the regulation of the actin cytoskeleton through its interactions with actin capping protein (CP). This is Pleckstrin homology domain-containing family O member 1 (PLEKHO1) from Gallus gallus (Chicken).